Here is a 114-residue protein sequence, read N- to C-terminus: Chaperonin GroEL (114 aa).

Residue 22-26 participates in ATP binding; sequence DGTTT.

It belongs to the chaperonin (HSP60) family. As to quaternary structure, forms a cylinder of 14 subunits composed of two heptameric rings stacked back-to-back. Interacts with the co-chaperonin GroES.

The protein resides in the cytoplasm. It catalyses the reaction ATP + H2O + a folded polypeptide = ADP + phosphate + an unfolded polypeptide.. Its function is as follows. Together with its co-chaperonin GroES, plays an essential role in assisting protein folding. The GroEL-GroES system forms a nano-cage that allows encapsulation of the non-native substrate proteins and provides a physical environment optimized to promote and accelerate protein folding. The chain is Chaperonin GroEL from Mycobacterium ulcerans.